Reading from the N-terminus, the 300-residue chain is Ferredoxin/F(420)H(2)-dependent CoB-CoM heterodisulfide reductase subunit B (300 aa).

This sequence belongs to the HdrB family. In terms of assembly, the ferredoxin/F(420)H(2)-dependent CoB-CoM heterodisulfide reductase is composed of three subunits; HdrA2, HdrB2 and HdrC2. Requires [4Fe-4S] cluster as cofactor.

It is found in the cytoplasm. It catalyses the reaction coenzyme B + coenzyme M + 2 oxidized [2Fe-2S]-[ferredoxin] = coenzyme M-coenzyme B heterodisulfide + 2 reduced [2Fe-2S]-[ferredoxin] + 2 H(+). It carries out the reaction coenzyme B + 2 oxidized coenzyme F420-(gamma-L-Glu)(n) + coenzyme M + 2 reduced [2Fe-2S]-[ferredoxin] + 4 H(+) = coenzyme M-coenzyme B heterodisulfide + 2 reduced coenzyme F420-(gamma-L-Glu)(n) + 2 oxidized [2Fe-2S]-[ferredoxin]. The protein operates within cofactor metabolism; coenzyme M-coenzyme B heterodisulfide reduction; coenzyme B and coenzyme M from coenzyme M-coenzyme B heterodisulfide: step 1/1. Functionally, part of a complex that catalyzes the reversible reduction of CoM-S-S-CoB to the thiol-coenzymes H-S-CoM (coenzyme M) and H-S-CoB (coenzyme B). Catalyzes the transfer of electrons from ferredoxin to CoM-S-S-CoB during methanogenesis from acetate. Electrons transfer from ferredoxin to CoM-S-S-CoB via HdrA2, HdrC2 and HdrB2. In addition, the complex can use electron bifurcation to direct electron pairs from reduced coenzyme F420 towards the reduction of both ferredoxin and CoB-CoM heterodisulfide. This activity may take place during Fe(III)-dependent anaerobic methane oxidation. This Methanosarcina acetivorans (strain ATCC 35395 / DSM 2834 / JCM 12185 / C2A) protein is Ferredoxin/F(420)H(2)-dependent CoB-CoM heterodisulfide reductase subunit B.